The sequence spans 480 residues: MEVTKPHACLREVVVTIPRGEVDRYMKDAYDELVPEAQVPGFRAGRAPRKLVEKQFKDRIEDRVKGSLLMDSLAKVTEDAEFSAIGEPDFDYESIELPEKGEFKYQFSIEVRPEFETPDWKKLELKKPVETISEEDVDAALQRVLSRYASLEASDAPAEIGDRLLITGKFVDGEKTISEMDEERVTLANRLSLSDAVCENFGELMKDCKEGDVVTGKVKLGEGHANEEMQGKEVDATFTVVEVLKEQLPELTSEFLDELGEFETEDELREFVRASLERQANFRTEQAMRGSIIEKLLASADFELPPTLVRRQMKRELDRKVLEFRRSGFDDDMIRRFVNASKQNMQQGTESSLREHFILEQIADEEKIDAEPQEYETEIQLIAEQSDSSPRRVRARLEKTGQMDALRNQIVERKVIELISEAATVTEEPVEKEAEEKNEEFAIDHEVLPTKDHDAIPAAKYDDNTPKGAETEDKQEKDKD.

The PPIase FKBP-type domain occupies 161 to 249 (GDRLLITGKF…VVEVLKEQLP (89 aa)). The interval 426–480 (TEEPVEKEAEEKNEEFAIDHEVLPTKDHDAIPAAKYDDNTPKGAETEDKQEKDKD) is disordered. A compositionally biased stretch (basic and acidic residues) spans 429–480 (PVEKEAEEKNEEFAIDHEVLPTKDHDAIPAAKYDDNTPKGAETEDKQEKDKD).

The protein belongs to the FKBP-type PPIase family. Tig subfamily.

It is found in the cytoplasm. The catalysed reaction is [protein]-peptidylproline (omega=180) = [protein]-peptidylproline (omega=0). In terms of biological role, involved in protein export. Acts as a chaperone by maintaining the newly synthesized protein in an open conformation. Functions as a peptidyl-prolyl cis-trans isomerase. The polypeptide is Trigger factor (Rhodopirellula baltica (strain DSM 10527 / NCIMB 13988 / SH1)).